A 209-amino-acid chain; its full sequence is 8-oxoguanine DNA glycosylase/AP lyase (209 aa).

Catalysis depends on residues K132 and D150.

It belongs to the type-2 OGG1 family.

The enzyme catalyses 2'-deoxyribonucleotide-(2'-deoxyribose 5'-phosphate)-2'-deoxyribonucleotide-DNA = a 3'-end 2'-deoxyribonucleotide-(2,3-dehydro-2,3-deoxyribose 5'-phosphate)-DNA + a 5'-end 5'-phospho-2'-deoxyribonucleoside-DNA + H(+). Catalyzes the excision of an oxidatively damaged form of guanine (7,8-dihydro-8-oxoguanine = 8-oxoG) from DNA. Also cleaves the DNA backbone at apurinic/apyrimidinic sites (AP sites). The chain is 8-oxoguanine DNA glycosylase/AP lyase from Picrophilus torridus (strain ATCC 700027 / DSM 9790 / JCM 10055 / NBRC 100828 / KAW 2/3).